The sequence spans 223 residues: Cytidylate kinase (223 aa).

Position 10-18 (10-18) interacts with ATP; that stretch reads GPASSGKST.

It belongs to the cytidylate kinase family. Type 1 subfamily.

Its subcellular location is the cytoplasm. It carries out the reaction CMP + ATP = CDP + ADP. It catalyses the reaction dCMP + ATP = dCDP + ADP. In Streptococcus pneumoniae serotype 4 (strain ATCC BAA-334 / TIGR4), this protein is Cytidylate kinase.